We begin with the raw amino-acid sequence, 179 residues long: Nucleoside diphosphate kinase 6 (179 aa).

6 residues coordinate ATP: Lys18, Phe67, Arg95, Thr101, Arg115, and Asn125. His128 functions as the Pros-phosphohistidine intermediate in the catalytic mechanism.

It belongs to the NDK family. The cofactor is Mg(2+).

It carries out the reaction a 2'-deoxyribonucleoside 5'-diphosphate + ATP = a 2'-deoxyribonucleoside 5'-triphosphate + ADP. It catalyses the reaction a ribonucleoside 5'-diphosphate + ATP = a ribonucleoside 5'-triphosphate + ADP. Its function is as follows. Major role in the synthesis of nucleoside triphosphates other than ATP. The ATP gamma phosphate is transferred to the NDP beta phosphate via a ping-pong mechanism, using a phosphorylated active-site intermediate. This is Nucleoside diphosphate kinase 6 (nme6) from Xenopus tropicalis (Western clawed frog).